We begin with the raw amino-acid sequence, 85 residues long: U4-theraphotoxin-Hhn1z (85 aa).

The N-terminal stretch at 1-22 is a signal peptide; sequence MKMTLIAILTCAAVLVLHTTAA. A propeptide spanning residues 23-48 is cleaved from the precursor; the sequence is EELEAESQLMEVGMPDTELEAVDEER. 3 disulfide bridges follow: cysteine 52–cysteine 66, cysteine 56–cysteine 77, and cysteine 71–cysteine 82.

The protein belongs to the neurotoxin 12 (Hwtx-2) family. 02 (Hwtx-2) subfamily. Expressed by the venom gland.

The protein resides in the secreted. Functionally, postsynaptic neurotoxin. The sequence is that of U4-theraphotoxin-Hhn1z from Cyriopagopus hainanus (Chinese bird spider).